Reading from the N-terminus, the 457-residue chain is tRNA(Ile)-lysidine synthase (457 aa).

27–32 (SGGLDS) contacts ATP.

The protein belongs to the tRNA(Ile)-lysidine synthase family.

Its subcellular location is the cytoplasm. The catalysed reaction is cytidine(34) in tRNA(Ile2) + L-lysine + ATP = lysidine(34) in tRNA(Ile2) + AMP + diphosphate + H(+). Its function is as follows. Ligates lysine onto the cytidine present at position 34 of the AUA codon-specific tRNA(Ile) that contains the anticodon CAU, in an ATP-dependent manner. Cytidine is converted to lysidine, thus changing the amino acid specificity of the tRNA from methionine to isoleucine. The chain is tRNA(Ile)-lysidine synthase from Hamiltonella defensa subsp. Acyrthosiphon pisum (strain 5AT).